Consider the following 251-residue polypeptide: Probable transcriptional regulatory protein Pmob_0807 (251 aa).

The segment at 1 to 22 (MSGHNKWANIKHRKGAQDAKRS) is disordered.

This sequence belongs to the TACO1 family.

The protein localises to the cytoplasm. The protein is Probable transcriptional regulatory protein Pmob_0807 of Petrotoga mobilis (strain DSM 10674 / SJ95).